The primary structure comprises 4538 residues: Polyketide synthase PksL (4538 aa).

The tract at residues 1–123 (MRWRSNVKKI…ADMHADSPAI (123 aa)) is N-terminal hotdog fold 1. A PKS/mFAS DH 1 domain is found at 1–285 (MRWRSNVKKI…SKLVREAELI (285 aa)). The active-site Proton acceptor; for dehydratase activity 1 is His-26. Positions 138-285 (QNVVQLDDVY…SKLVREAELI (148 aa)) are C-terminal hotdog fold 1. Catalysis depends on Asp-199, which acts as the Proton donor; for dehydratase activity 1. The disordered stretch occupies residues 289-314 (HQDAQETQMTRADTAERDKPADMVSS). The Carrier 1 domain maps to 320–394 (SEAEQFVSQL…ELSAFLAEEY (75 aa)). An O-(pantetheine 4'-phosphoryl)serine modification is found at Ser-354. Positions 433 to 871 (AGDIAIIGLA…GSNAHIILEE (439 aa)) constitute a Ketosynthase family 3 (KS3) 1 domain. Catalysis depends on for beta-ketoacyl synthase 1 activity residues Cys-609, His-744, and His-784. The segment at 1048 to 1226 (HILHPLLHQN…DSLYAGENGV (179 aa)) is dehydratase. Residues 1051–1175 (HPLLHQNVSD…GSAVLCEAGE (125 aa)) are N-terminal hotdog fold 2. Residues 1051 to 1340 (HPLLHQNVSD…ARVLETDQEG (290 aa)) enclose the PKS/mFAS DH 2 domain. The active-site Proton acceptor; for dehydratase activity 2 is His-1080. Residues 1189–1340 (NGRTLSPFDC…ARVLETDQEG (152 aa)) are C-terminal hotdog fold 2. Catalysis depends on Asp-1251, which acts as the Proton donor; for dehydratase activity 2. Residues 1520–1713 (KGVYLITGGA…WKDGGMQIDA (194 aa)) form a beta-ketoacyl reductase 1 region. The Carrier 2 domain occupies 1800–1873 (EKAENYFKQV…SLTRYFIDSR (74 aa)). The residue at position 1834 (Ser-1834) is an O-(pantetheine 4'-phosphoryl)serine. The Ketosynthase family 3 (KS3) 2 domain occupies 1926-2365 (TEEIAIIGIS…GVNAHILIEE (440 aa)). Catalysis depends on for beta-ketoacyl synthase 2 activity residues Cys-2103, His-2238, and His-2278. The tract at residues 2546 to 2568 (TEEPFAPVQPVIPKPSVDREASG) is disordered. Carrier domains follow at residues 2597–2674 (ITAE…AHEL) and 2738–2815 (VAIE…KSEL). 2 positions are modified to O-(pantetheine 4'-phosphoryl)serine: Ser-2634 and Ser-2775. The segment at 2828-2854 (SFEAAQQKPAASSHPKPAERPLQPVQH) is disordered. Positions 2873–3294 (EDAIAIVGMS…GTNAHIVIEE (422 aa)) constitute a Ketosynthase family 3 (KS3) 3 domain. Active-site for beta-ketoacyl synthase 3 activity residues include Cys-3040, His-3175, and His-3215. Residues 3686–3887 (DKVLLITGGT…PNWKETGLGE (202 aa)) are beta-ketoacyl reductase 2. The region spanning 3960–4037 (NLFPETVDWL…SFAHWLISKY (78 aa)) is the Carrier 5 domain. Ser-3997 bears the O-(pantetheine 4'-phosphoryl)serine mark. A Ketosynthase family 3 (KS3) 4 domain is found at 4082–4485 (AEDIAIIGLS…GTNAHLIIEG (404 aa)). Residue Cys-4237 is the For beta-ketoacyl synthase 4 activity of the active site.

The cofactor is pantetheine 4'-phosphate.

Its subcellular location is the cytoplasm. It functions in the pathway antibiotic biosynthesis; bacillaene biosynthesis. Its function is as follows. Involved in some intermediate steps for the synthesis of the antibiotic polyketide bacillaene which is involved in secondary metabolism. The protein is Polyketide synthase PksL (pksL) of Bacillus subtilis (strain 168).